The following is a 409-amino-acid chain: MGANGDVALSRIGATRPALSAWRFVTVFGVVGLLADVVYEGARSITGPLLASLGATGLVVGVVTGVGEAAALGLRLVSGPLADRSRRFWAWTIAGYTLTVVTVPLLGIAGALWVACALVIAERVGKAVRGPAKDTLLSHAASVTGRGRGFAVHEALDQVGAMIGPLTVAGMLAITGNAYAPALGVLTLPGGAALALLLWLQRRVPRPESYEDCPVVLGNPSAPRPWALPAQFWLYCGFTAITMLGFGTFGLLSFHMVSHGVLAAAMVPVVYAAAMAADALTALASGFSYDRYGAKTLAVLPILSILVVLFAFTDNVTMVVIGTLVWGAAVGIQESTLRGVVADLVASPRRASAYGVFAAGLGAATAGGGALIGWLYDISIGTLVVVVIALELMALVMMFAIRLPRVAPS.

Transmembrane regions (helical) follow at residues 18–38, 47–67, 100–120, 159–179, 180–200, 232–252, 260–280, 302–322, 355–375, and 380–400; these read ALSAWRFVTVFGVVGLLADVV, GPLLASLGATGLVVGVVTGVG, VVTVPLLGIAGALWVACALVI, VGAMIGPLTVAGMLAITGNAY, APALGVLTLPGGAALALLLWL, FWLYCGFTAITMLGFGTFGLL, GVLAAAMVPVVYAAAMAADAL, ILSILVVLFAFTDNVTMVVIG, GVFAAGLGAATAGGGALIGWL, and IGTLVVVVIALELMALVMMFA.

Its subcellular location is the cell membrane. This is an uncharacterized protein from Mycobacterium tuberculosis (strain CDC 1551 / Oshkosh).